The chain runs to 159 residues: MGVYTYENEFTSDIPAPKLFKAFVLDADNLIPKIAPQAVKCAEILEGDGGPGTIKKITFGEGSHYGYVKHKIHSIDKENHTYSYSLIEGDALSDNIEKIDYETKLVSAPHGTIIKTTSKYHTKGDVEIKEEHVKAGKEKASHLFKLIEGYLKDHPSEYN.

The protein belongs to the BetVI family. Monomer.

In Fragaria ananassa (Strawberry), this protein is Major strawberry allergen Fra a 1-C.